The following is an 86-amino-acid chain: YcgL domain-containing protein IL1825 (86 aa).

The region spanning 1-85 is the YcgL domain; that stretch reads MLCDVYRSSK…KREELQVNVN (85 aa).

The polypeptide is YcgL domain-containing protein IL1825 (Idiomarina loihiensis (strain ATCC BAA-735 / DSM 15497 / L2-TR)).